The chain runs to 951 residues: Valine--tRNA ligase (951 aa).

The 'HIGH' region motif lies at 42 to 52 (PNVTGSLHMGH). A 'KMSKS' region motif is present at residues 554–558 (KMSKS). Lys-557 contributes to the ATP binding site. Positions 880–944 (AGLINKEDEL…AEAKAKLIEQ (65 aa)) form a coiled coil.

The protein belongs to the class-I aminoacyl-tRNA synthetase family. ValS type 1 subfamily. Monomer.

The protein localises to the cytoplasm. It catalyses the reaction tRNA(Val) + L-valine + ATP = L-valyl-tRNA(Val) + AMP + diphosphate. Functionally, catalyzes the attachment of valine to tRNA(Val). As ValRS can inadvertently accommodate and process structurally similar amino acids such as threonine, to avoid such errors, it has a 'posttransfer' editing activity that hydrolyzes mischarged Thr-tRNA(Val) in a tRNA-dependent manner. The polypeptide is Valine--tRNA ligase (Salmonella paratyphi A (strain ATCC 9150 / SARB42)).